The sequence spans 266 residues: Undecaprenyl-diphosphatase (266 aa).

The next 8 membrane-spanning stretches (helical) occupy residues 1–21 (MTLF…FLPI), 39–59 (QGLA…MIYF), 87–107 (WYVI…KGWI), 113–133 (TALV…YADA), 143–163 (GLTL…LIPG), 187–207 (FSFL…TLDL), 218–238 (ALLY…YLFL), and 244–264 (IGML…LWFV).

This sequence belongs to the UppP family.

The protein resides in the cell inner membrane. The catalysed reaction is di-trans,octa-cis-undecaprenyl diphosphate + H2O = di-trans,octa-cis-undecaprenyl phosphate + phosphate + H(+). Catalyzes the dephosphorylation of undecaprenyl diphosphate (UPP). Confers resistance to bacitracin. The protein is Undecaprenyl-diphosphatase of Alteromonas mediterranea (strain DSM 17117 / CIP 110805 / LMG 28347 / Deep ecotype).